Consider the following 71-residue polypeptide: Small, acid-soluble spore protein I (71 aa).

Belongs to the SspI family.

It localises to the spore core. The protein is Small, acid-soluble spore protein I of Geobacillus sp. (strain WCH70).